The primary structure comprises 106 residues: ATP-dependent Clp protease adapter protein ClpS (106 aa).

It belongs to the ClpS family. Binds to the N-terminal domain of the chaperone ClpA.

Functionally, involved in the modulation of the specificity of the ClpAP-mediated ATP-dependent protein degradation. This is ATP-dependent Clp protease adapter protein ClpS from Methylococcus capsulatus (strain ATCC 33009 / NCIMB 11132 / Bath).